The chain runs to 23 residues: Acidic phospholipase A2 CTs-A2 (23 aa).

It depends on Ca(2+) as a cofactor. Post-translationally, contains 7 disulfide bonds. Expressed by the venom gland.

Its subcellular location is the secreted. It carries out the reaction a 1,2-diacyl-sn-glycero-3-phosphocholine + H2O = a 1-acyl-sn-glycero-3-phosphocholine + a fatty acid + H(+). Snake venom phospholipase A2 (PLA2) that shows a moderate inhibition of ADP-induced human platelet aggregation when tested on platelet rich plasma. Exhibits moderate hydrolytic activities and prefers the anionic micelles (dPPC with deoxycholate) to the zwitterionic micelles (dPPC with Triton X-100). PLA2 catalyzes the calcium-dependent hydrolysis of the 2-acyl groups in 3-sn-phosphoglycerides. The protein is Acidic phospholipase A2 CTs-A2 of Trimeresurus stejnegeri (Chinese green tree viper).